Consider the following 271-residue polypeptide: Phosphatidylglycerol--prolipoprotein diacylglyceryl transferase (271 aa).

The next 7 membrane-spanning stretches (helical) occupy residues 25 to 45 (WYGI…KFFV), 60 to 80 (YFIW…ILIY), 103 to 123 (FVGI…IATL), 134 to 154 (WIFL…GRIG), 181 to 201 (PSQF…VYLA), 209 to 229 (GELI…CEFY), and 235 to 255 (GIGF…IMFI). Residue R152 coordinates a 1,2-diacyl-sn-glycero-3-phospho-(1'-sn-glycerol).

The protein belongs to the Lgt family.

The protein localises to the cell inner membrane. The catalysed reaction is L-cysteinyl-[prolipoprotein] + a 1,2-diacyl-sn-glycero-3-phospho-(1'-sn-glycerol) = an S-1,2-diacyl-sn-glyceryl-L-cysteinyl-[prolipoprotein] + sn-glycerol 1-phosphate + H(+). Its pathway is protein modification; lipoprotein biosynthesis (diacylglyceryl transfer). Catalyzes the transfer of the diacylglyceryl group from phosphatidylglycerol to the sulfhydryl group of the N-terminal cysteine of a prolipoprotein, the first step in the formation of mature lipoproteins. The chain is Phosphatidylglycerol--prolipoprotein diacylglyceryl transferase from Campylobacter jejuni subsp. doylei (strain ATCC BAA-1458 / RM4099 / 269.97).